The chain runs to 438 residues: Serine--tRNA ligase (438 aa).

An L-serine-binding site is contributed by 235–237 (TAE). ATP contacts are provided by residues 266–268 (RKE) and V282. An L-serine-binding site is contributed by E289. 355–358 (ELVS) is an ATP binding site. Residue T393 participates in L-serine binding.

This sequence belongs to the class-II aminoacyl-tRNA synthetase family. Type-1 seryl-tRNA synthetase subfamily. Homodimer. The tRNA molecule binds across the dimer.

It catalyses the reaction tRNA(Ser) + L-serine + ATP = L-seryl-tRNA(Ser) + AMP + diphosphate + H(+). The enzyme catalyses tRNA(Sec) + L-serine + ATP = L-seryl-tRNA(Sec) + AMP + diphosphate + H(+). It functions in the pathway aminoacyl-tRNA biosynthesis; selenocysteinyl-tRNA(Sec) biosynthesis; L-seryl-tRNA(Sec) from L-serine and tRNA(Sec): step 1/1. Catalyzes the attachment of serine to tRNA(Ser). Is also able to aminoacylate tRNA(Sec) with serine, to form the misacylated tRNA L-seryl-tRNA(Sec), which will be further converted into selenocysteinyl-tRNA(Sec). This is Serine--tRNA ligase from Helianthus annuus (Common sunflower).